The following is a 235-amino-acid chain: Transcription factor hepR (235 aa).

Residues 14–45 (QNSPESSRDVLSMASPGLLPIDPSPEHDETNK) form a disordered region. The segment at 175-205 (IQCPCLDERGERCSRMFSRLDNMRDHVRRIH) adopts a C2H2-type zinc-finger fold.

The protein localises to the nucleus. Its function is as follows. Transcription factor; part of the gene cluster that mediates the biosynthesis of heptelidic acid (HA), a sesquiterpene lactone that acts as an inhibitor of glyceraldehyde-3-phosphatedehydrogenase (GAPDH) and a growth inhibitor of the salt-tolerant lactic acid bacteria in soy sauce brewing. Both hepR and hepS regulate the transcription of the heptelidic acid cluster, but they are not involved in mutual transcriptional regulation and act with different mechanisms. This chain is Transcription factor hepR, found in Aspergillus oryzae (strain ATCC 42149 / RIB 40) (Yellow koji mold).